Reading from the N-terminus, the 2023-residue chain is Protein Daple (2023 aa).

Residues asparagine 11 to alanine 131 form the Calponin-homology (CH) domain. Coiled-coil stretches lie at residues arginine 250–glutamate 415, asparagine 458–asparagine 1064, and leucine 1105–phenylalanine 1419. A disordered region spans residues arginine 1013–proline 1035. The segment covering glutamate 1022 to serine 1033 has biased composition (polar residues). Disordered regions lie at residues lysine 1441–serine 1824 and leucine 1837–valine 2023. Basic and acidic residues predominate over residues proline 1442–serine 1460. The span at serine 1478–glutamine 1491 shows a compositional bias: pro residues. 2 stretches are compositionally biased toward polar residues: residues aspartate 1497–alanine 1518 and threonine 1564–leucine 1585. 2 stretches are compositionally biased toward low complexity: residues serine 1623 to leucine 1643 and arginine 1667 to serine 1704. The short motif at serine 1700 to serine 1728 is the GBA element. 4 stretches are compositionally biased toward polar residues: residues glutamine 1714–glycine 1727, threonine 1752–threonine 1763, leucine 1785–proline 1799, and alanine 1809–serine 1824. Over residues valine 1890 to phenylalanine 1904 the composition is skewed to basic and acidic residues. Residues glycine 1927–glycine 1945 show a composition bias toward low complexity. The segment covering glutamine 1974–aspartate 1988 has biased composition (basic and acidic residues). Over residues threonine 1989–glutamine 2014 the composition is skewed to polar residues. The PDZ-binding motif lies at tyrosine 2020–valine 2023.

The protein belongs to the CCDC88 family.

It is found in the cytoplasm. The protein localises to the cell junction. Functionally, positive regulator of Wnt signaling, acting synergistically with dvl2. Functions upstream of ctnnb1/beta-catenin in the canonical Wnt pathway, and also activates jnk in the Wnt/planar cell polarity (PCP) pathway. Acts as a non-receptor guanine nucleotide exchange factor which binds to and activates guanine nucleotide-binding protein G(i) alpha (Gi-alpha) subunits. This promotes apical cell constriction and subsequent bending of the neural plate during neurulation via arhgef18. The protein is Protein Daple of Danio rerio (Zebrafish).